Reading from the N-terminus, the 276-residue chain is Glutamate 5-kinase (276 aa).

Lys-14 serves as a coordination point for ATP. Substrate-binding residues include Ser-54, Asp-141, and Asn-157. Residues 177 to 178 and 219 to 225 contribute to the ATP site; these read SD and TGGMLTK.

Belongs to the glutamate 5-kinase family.

It localises to the cytoplasm. It carries out the reaction L-glutamate + ATP = L-glutamyl 5-phosphate + ADP. Its pathway is amino-acid biosynthesis; L-proline biosynthesis; L-glutamate 5-semialdehyde from L-glutamate: step 1/2. Catalyzes the transfer of a phosphate group to glutamate to form L-glutamate 5-phosphate. This Listeria welshimeri serovar 6b (strain ATCC 35897 / DSM 20650 / CCUG 15529 / CIP 8149 / NCTC 11857 / SLCC 5334 / V8) protein is Glutamate 5-kinase.